The following is a 306-amino-acid chain: N-acetylmuramic acid 6-phosphate etherase (306 aa).

In terms of domain architecture, SIS spans 59-222 (ISEALRQGGR…STGAMVQLGK (164 aa)). The Proton donor role is filled by Glu-87. Glu-118 is a catalytic residue.

It belongs to the GCKR-like family. MurNAc-6-P etherase subfamily. In terms of assembly, homodimer.

The catalysed reaction is N-acetyl-D-muramate 6-phosphate + H2O = N-acetyl-D-glucosamine 6-phosphate + (R)-lactate. Its pathway is amino-sugar metabolism; N-acetylmuramate degradation. In terms of biological role, specifically catalyzes the cleavage of the D-lactyl ether substituent of MurNAc 6-phosphate, producing GlcNAc 6-phosphate and D-lactate. The protein is N-acetylmuramic acid 6-phosphate etherase of Gloeothece citriformis (strain PCC 7424) (Cyanothece sp. (strain PCC 7424)).